A 47-amino-acid polypeptide reads, in one-letter code: Large ribosomal subunit protein bL34 (47 aa).

Residues 1-28 (MAKGKRTFQPNNRRRARVHGFRTRMRTR) are disordered.

The protein belongs to the bacterial ribosomal protein bL34 family.

The protein is Large ribosomal subunit protein bL34 of Corynebacterium efficiens (strain DSM 44549 / YS-314 / AJ 12310 / JCM 11189 / NBRC 100395).